A 43-amino-acid chain; its full sequence is Cuticle protein CP434 (43 aa).

2 repeat units span residues 1 to 18 (ALVG…PVQF) and 25 to 42 (VLTG…NIQL).

Calcified shell.

This Cancer pagurus (Rock crab) protein is Cuticle protein CP434.